Reading from the N-terminus, the 238-residue chain is Thymidine kinase a (238 aa).

Residues 38 to 45 (GPMFSGKS), 70 to 72 (DTR), and 115 to 118 (DEAQ) each bind ATP. Glu116 functions as the Proton acceptor in the catalytic mechanism. A substrate-binding site is contributed by Tyr147. Cys172 and Cys175 together coordinate Zn(2+). Substrate contacts are provided by residues 191–195 (TELIG) and Tyr200. Residue Cys204 coordinates Zn(2+).

This sequence belongs to the thymidine kinase family. Monomer and dimer. Dimerization is stimulated by ATP. Expressed ubiquitously.

It is found in the cytoplasm. The catalysed reaction is thymidine + ATP = dTMP + ADP + H(+). It participates in purine metabolism. It functions in the pathway pyrimidine metabolism. Functionally, part of the salvage pathway for purine and pyrimidine deoxyribonucleotide synthesis. Phosphorylates preferentially purines over pyrimidines. Mediates tolerance to genotoxins, such as ultraviolet-C (UV-C) irradiation, MMC, a DNA crosslinker, and ZEO, a DNA intercalator, that induce double-strand breaks and thus contributes to several DNA repair pathways by providing deoxythymidine triphosphate that serve as precursors for DNA repair and to balance deoxyribonucleotides pools. The polypeptide is Thymidine kinase a (Arabidopsis thaliana (Mouse-ear cress)).